A 994-amino-acid chain; its full sequence is Probable beta-galactosidase C (994 aa).

The signal sequence occupies residues 1–19; that stretch reads MKLQSILSCWAILVAQIWA. Substrate is bound at residue Tyr78. N-linked (GlcNAc...) asparagine glycosylation occurs at Asn88. The substrate site is built by Asn123, Ala124, Glu125, and Asn183. Glu184 functions as the Proton donor in the catalytic mechanism. Tyr247 contacts substrate. Residues Cys253 and Cys301 are joined by a disulfide bond. Asn272 carries N-linked (GlcNAc...) asparagine glycosylation. Glu283 serves as the catalytic Nucleophile. A substrate-binding site is contributed by Tyr350. Asn388, Asn407, Asn433, Asn500, Asn514, Asn521, Asn584, Asn600, Asn674, Asn712, Asn717, Asn757, Asn861, and Asn969 each carry an N-linked (GlcNAc...) asparagine glycan.

This sequence belongs to the glycosyl hydrolase 35 family.

It localises to the secreted. It carries out the reaction Hydrolysis of terminal non-reducing beta-D-galactose residues in beta-D-galactosides.. Cleaves beta-linked terminal galactosyl residues from gangliosides, glycoproteins, and glycosaminoglycans. This is Probable beta-galactosidase C (lacC) from Aspergillus niger (strain ATCC MYA-4892 / CBS 513.88 / FGSC A1513).